The chain runs to 293 residues: Formamidopyrimidine-DNA glycosylase (293 aa).

Residue proline 2 is the Schiff-base intermediate with DNA of the active site. The active-site Proton donor is glutamate 3. Lysine 60 (proton donor; for beta-elimination activity) is an active-site residue. The DNA site is built by histidine 110, arginine 129, and lysine 174. Residues 259–293 (NVYRRTGKKCHACKNLIERQKISGRSTHWCRKCQK) form an FPG-type zinc finger. Residue arginine 283 is the Proton donor; for delta-elimination activity of the active site.

Belongs to the FPG family. As to quaternary structure, monomer. Zn(2+) is required as a cofactor.

The enzyme catalyses Hydrolysis of DNA containing ring-opened 7-methylguanine residues, releasing 2,6-diamino-4-hydroxy-5-(N-methyl)formamidopyrimidine.. It catalyses the reaction 2'-deoxyribonucleotide-(2'-deoxyribose 5'-phosphate)-2'-deoxyribonucleotide-DNA = a 3'-end 2'-deoxyribonucleotide-(2,3-dehydro-2,3-deoxyribose 5'-phosphate)-DNA + a 5'-end 5'-phospho-2'-deoxyribonucleoside-DNA + H(+). Its function is as follows. Involved in base excision repair of DNA damaged by oxidation or by mutagenic agents. Acts as a DNA glycosylase that recognizes and removes damaged bases. Has a preference for oxidized purines, such as 7,8-dihydro-8-oxoguanine (8-oxoG). Has AP (apurinic/apyrimidinic) lyase activity and introduces nicks in the DNA strand. Cleaves the DNA backbone by beta-delta elimination to generate a single-strand break at the site of the removed base with both 3'- and 5'-phosphates. The sequence is that of Formamidopyrimidine-DNA glycosylase from Prochlorococcus marinus (strain MIT 9515).